Reading from the N-terminus, the 126-residue chain is MLKKLIMGFFLLILLGIAGVAVMNYYYEANYDKELVAYDEGVFNDRVHFTSELLGPGTYRIIAGGTGIVEDIEIIDRSGNVVAKHEDTTNLLYGSSNSFVVRVNYAPPNPGEEYEATIEIYRYVEK.

Residues 1-23 (MLKKLIMGFFLLILLGIAGVAVM) form the signal peptide.

This is an uncharacterized protein from Archaeoglobus fulgidus (strain ATCC 49558 / DSM 4304 / JCM 9628 / NBRC 100126 / VC-16).